A 285-amino-acid polypeptide reads, in one-letter code: Bifunctional protein FolD (285 aa).

Residues 165–167 and serine 190 contribute to the NADP(+) site; that span reads GRS.

This sequence belongs to the tetrahydrofolate dehydrogenase/cyclohydrolase family. Homodimer.

It carries out the reaction (6R)-5,10-methylene-5,6,7,8-tetrahydrofolate + NADP(+) = (6R)-5,10-methenyltetrahydrofolate + NADPH. The enzyme catalyses (6R)-5,10-methenyltetrahydrofolate + H2O = (6R)-10-formyltetrahydrofolate + H(+). It participates in one-carbon metabolism; tetrahydrofolate interconversion. In terms of biological role, catalyzes the oxidation of 5,10-methylenetetrahydrofolate to 5,10-methenyltetrahydrofolate and then the hydrolysis of 5,10-methenyltetrahydrofolate to 10-formyltetrahydrofolate. This Staphylococcus carnosus (strain TM300) protein is Bifunctional protein FolD.